The sequence spans 280 residues: MGWHDGCIRCMVGVPFASVIATVLCFAGVALFCGCGHEALSGTEKLIETYFSKNYQEYEYLIHVINAFQYVIYGIAIFFFLYGILLLAEGFYTTTAIKHILGEFKPPAMKGGLISTVTGGPPKGRSTRGRQPVHTIELICRCLGKWLGHPDKFVGVTYVITILWILIFACSAVPVYIYFNTWVTCQSIAFPGKTTTSVSTLCLDARMYGVLPWNAFPGKVCGTSLLAICKTSEFQMTFHLFIAAFVGAAATLVALLTYMVGASFNYAVLRVTGRSDRSKF.

At 1 to 10 (MGWHDGCIRC) the chain is on the cytoplasmic side. 2 S-palmitoyl cysteine lipidation sites follow: Cys7 and Cys10. The helical transmembrane segment at 11–36 (MVGVPFASVIATVLCFAGVALFCGCG) threads the bilayer. At 37-59 (HEALSGTEKLIETYFSKNYQEYE) the chain is on the extracellular side. A helical transmembrane segment spans residues 60 to 88 (YLIHVINAFQYVIYGIAIFFFLYGILLLA). Residues 89-152 (EGFYTTTAIK…LGKWLGHPDK (64 aa)) are Cytoplasmic-facing. Residues Cys140 and Cys142 are each lipidated (S-palmitoyl cysteine). A helical membrane pass occupies residues 153-179 (FVGVTYVITILWILIFACSAVPVYIYF). The Extracellular portion of the chain corresponds to 180-239 (NTWVTCQSIAFPGKTTTSVSTLCLDARMYGVLPWNAFPGKVCGTSLLAICKTSEFQMTFH). Disulfide bonds link Cys185–Cys229 and Cys202–Cys221. A helical membrane pass occupies residues 240–269 (LFIAAFVGAAATLVALLTYMVGASFNYAVL). Residues 270 to 280 (RVTGRSDRSKF) are Cytoplasmic-facing.

Belongs to the myelin proteolipid protein family.

The protein localises to the cell membrane. Its function is as follows. This is the major myelin protein from the central nervous system. It plays an important role in the formation or maintenance of the multilamellar structure of myelin. The chain is Myelin proteolipid protein B (plp1-b) from Xenopus laevis (African clawed frog).